The following is a 367-amino-acid chain: Molybdenum import ATP-binding protein ModC (367 aa).

Residues 1–234 form the ABC transporter domain; it reads MSSAALEVRL…PALSGGFGHE (234 aa). 33–40 serves as a coordination point for ATP; that stretch reads GPSGAGKS. Positions 293-366 constitute a Mop domain; that stretch reads HISLHNILPV…IKSVAVDVLG (74 aa).

The protein belongs to the ABC transporter superfamily. Molybdate importer (TC 3.A.1.8) family. The complex is composed of two ATP-binding proteins (ModC), two transmembrane proteins (ModB) and a solute-binding protein (ModA).

The protein localises to the cell inner membrane. The enzyme catalyses molybdate(out) + ATP + H2O = molybdate(in) + ADP + phosphate + H(+). In terms of biological role, part of the ABC transporter complex ModABC involved in molybdenum import. Responsible for energy coupling to the transport system. The chain is Molybdenum import ATP-binding protein ModC from Granulibacter bethesdensis (strain ATCC BAA-1260 / CGDNIH1).